Here is a 249-residue protein sequence, read N- to C-terminus: Probable transcriptional regulatory protein A1S_1496 (249 aa).

The protein belongs to the TACO1 family.

The protein resides in the cytoplasm. The chain is Probable transcriptional regulatory protein A1S_1496 from Acinetobacter baumannii (strain ATCC 17978 / DSM 105126 / CIP 53.77 / LMG 1025 / NCDC KC755 / 5377).